The chain runs to 229 residues: tRNA (guanine-N(7)-)-methyltransferase (229 aa).

Residues E59, E84, D111, and D134 each contribute to the S-adenosyl-L-methionine site. The active site involves D134. Residues K138, D170, and 205 to 208 (TKFE) contribute to the substrate site.

This sequence belongs to the class I-like SAM-binding methyltransferase superfamily. TrmB family.

It carries out the reaction guanosine(46) in tRNA + S-adenosyl-L-methionine = N(7)-methylguanosine(46) in tRNA + S-adenosyl-L-homocysteine. It participates in tRNA modification; N(7)-methylguanine-tRNA biosynthesis. Its function is as follows. Catalyzes the formation of N(7)-methylguanine at position 46 (m7G46) in tRNA. In Nitrosospira multiformis (strain ATCC 25196 / NCIMB 11849 / C 71), this protein is tRNA (guanine-N(7)-)-methyltransferase.